A 9439-amino-acid chain; its full sequence is Extracellular matrix-binding protein ebh (9439 aa).

FIVAR domains are found at residues 1815 to 1871, 1901 to 1957, 1985 to 2041, 2071 to 2127, 2155 to 2211, 2241 to 2297, 2325 to 2381, 2411 to 2467, 2488 to 2551, 2581 to 2638, 2665 to 2720, 2748 to 2804, 2832 to 2888, 2918 to 2974, 3002 to 3058, 3088 to 3144, 3172 to 3228, 3258 to 3314, 3335 to 3398, 3428 to 3484, 3512 to 3567, 3595 to 3650, 3678 to 3733, 3802 to 3860, 3928 to 3983, 4056 to 4114, 4182 to 4240, 4308 to 4365, and 4433 to 4491; these read ARRR…VNSA, AKEQ…INDA, AYDT…VRDA, AKKR…ITSE, AYNK…VTQA, AKNR…ISSE, AYNK…VEDA, AKEK…ITEN, DTTS…VNNA, ARNR…STEI, AKNQ…IRTN, AKTA…VSDE, AYNQ…VNNA, AKEQ…ISNA, AYNQ…VTAA, AKQQ…ITNE, AYNQ…VAQA, AKNQ…ISDE, DTTE…VNNA, ARLN…ITTE, AKTA…IKTN, IKRQ…VKES, AKNR…IRQN, SMTA…IDQK, AMTQ…LDPA, AMQA…VNQK, SMGT…VDNA, AMHT…INQK, and VMEQ…IEQA. A compositionally biased stretch (basic and acidic residues) spans 2495-2507; it reads EVRKLSRRGDTNN. Residues 2495-2514 form a disordered region; it reads EVRKLSRRGDTNNKKPSSVS. A compositionally biased stretch (polar residues) spans 2925 to 2938; sequence AVDQVPSTEGMTQQ. Residues 2925 to 2951 are disordered; the sequence is AVDQVPSTEGMTQQTKDDYNSKQQAAQ. Residues 4522 to 4542 are disordered; it reads LSGLTNEQKPKENQAVNGAQT. The 59-residue stretch at 4559–4617 folds into the FIVAR 30 domain; it reads SMQTLRDLVNNQNAIHSTSNYFNEDSTQKNTYDNAIDNGSTYITGQHNPELNKSTIDQT. The interval 4648-4671 is disordered; it reads LGYLNDPQKSGEESLVNGSNTRSE. FIVAR domains follow at residues 4685–4743, 4811–4869, 4937–4995, 5063–5115, 5189–5246, 5314–5372, 5440–5498, 5566–5624, 5692–5750, 5818–5875, 5943–6000, 6068–6126, 6194–6252, and 6320–6378; these read AMKQ…IEQK, AMQA…IEQA, AMSN…IEQA, AMEA…VLDK, AMLG…INQL, LMGA…VTTA, AMGE…IDQA, AMKK…ITNA, AMKQ…IADT, DMST…LQDL, AMKA…IKQA, KMEE…INRT, AMQQ…IQAI, and EMGT…IADA. Over residues 5699–5712 the composition is skewed to polar residues; that stretch reads QVNQDDQISNSSPF. Positions 5699 to 5719 are disordered; sequence QVNQDDQISNSSPFINEDSDK. The interval 6413-6434 is disordered; that stretch reads NNSQRQSEHDEINSAPSRTEVS. 18 consecutive FIVAR domains span residues 6446 to 6504, 6572 to 6630, 6698 to 6755, 6823 to 6877, 6949 to 7007, 7075 to 7133, 7201 to 7259, 7327 to 7384, 7452 to 7510, 7578 to 7636, 7704 to 7762, 7830 to 7888, 7956 to 8010, 8078 to 8137, 8205 to 8264, 8332 to 8391, 8459 to 8518, and 8587 to 8643; these read AMRQ…IEDA, AMKA…INRA, SMNQ…IDQA, TMKA…ANDE, AMKK…INTI, SMNT…VERA, DMKK…IENA, AMKH…IKQL, AMEN…IEHA, AMKA…INSI, AMET…VDIV, AMKS…VRQA, VMGK…TKQA, IMGE…IDTF, AMKS…IQGL, AMKD…VLGL, KMKL…IQHL, and AMQG…ANII. The chain crosses the membrane as a helical span at residues 9306-9324; sequence TVGVITLTGLLSSFWLVLA. Basic and acidic residues-rich tracts occupy residues 9363–9375, 9386–9395, and 9404–9413; these read DKEEQIQNDDKHS, EKQLSEEDIH, and QNSDNKDTKQ. The disordered stretch occupies residues 9363–9439; sequence DKEEQIQNDD…VVKTKKRSKK (77 aa). Positions 9414-9439 are enriched in basic residues; sequence KKVTSKKKKTPQSTKKVVKTKKRSKK.

It localises to the cell membrane. This is Extracellular matrix-binding protein ebh (ebh) from Staphylococcus epidermidis (strain ATCC 35984 / DSM 28319 / BCRC 17069 / CCUG 31568 / BM 3577 / RP62A).